The primary structure comprises 320 residues: tRNA-cytidine(32) 2-sulfurtransferase (320 aa).

The PP-loop motif signature appears at 54-59 (SGGKDS). 3 residues coordinate [4Fe-4S] cluster: Cys-129, Cys-132, and Cys-220.

It belongs to the TtcA family. In terms of assembly, homodimer. Requires Mg(2+) as cofactor. [4Fe-4S] cluster serves as cofactor.

It localises to the cytoplasm. The catalysed reaction is cytidine(32) in tRNA + S-sulfanyl-L-cysteinyl-[cysteine desulfurase] + AH2 + ATP = 2-thiocytidine(32) in tRNA + L-cysteinyl-[cysteine desulfurase] + A + AMP + diphosphate + H(+). Its pathway is tRNA modification. Functionally, catalyzes the ATP-dependent 2-thiolation of cytidine in position 32 of tRNA, to form 2-thiocytidine (s(2)C32). The sulfur atoms are provided by the cysteine/cysteine desulfurase (IscS) system. The polypeptide is tRNA-cytidine(32) 2-sulfurtransferase (Bordetella bronchiseptica (strain ATCC BAA-588 / NCTC 13252 / RB50) (Alcaligenes bronchisepticus)).